The following is a 1162-amino-acid chain: Transcription termination factor 2 (1162 aa).

Residues Cys-6, His-9, Cys-32, and Cys-37 each coordinate Zn(2+). The segment at Cys-6–Pro-46 adopts a GRF-type zinc-finger fold. Disordered regions lie at residues Pro-97 to His-116, Ile-142 to Asp-358, Asp-388 to Pro-407, and Leu-459 to Val-503. The segment covering Ser-105–His-116 has biased composition (polar residues). Residues Ile-142–Leu-178 are compositionally biased toward basic and acidic residues. Lys-143 participates in a covalent cross-link: Glycyl lysine isopeptide (Lys-Gly) (interchain with G-Cter in SUMO2). Positions Ile-219 to Pro-232 are enriched in polar residues. Over residues Ser-233–Gln-245 the composition is skewed to low complexity. A compositionally biased stretch (basic and acidic residues) spans Asp-246–Val-258. Residues Leu-261–Lys-274 are compositionally biased toward polar residues. Low complexity predominate over residues Pro-323–Gly-338. The span at Leu-459–Gly-485 shows a compositional bias: polar residues. Ser-460 is subject to Phosphoserine. The Helicase ATP-binding domain occupies Trp-583–Ser-786. Asp-596 to Thr-603 contacts ATP. Residues Asp-737–His-740 carry the DEAH box motif. The interval Lys-871–Arg-890 is disordered. A compositionally biased stretch (polar residues) spans Gly-877–Phe-888. A phosphoserine mark is found at Ser-883 and Ser-908. The Helicase C-terminal domain maps to Ser-995–Arg-1157.

Belongs to the SNF2/RAD54 helicase family. In terms of assembly, interacts with CDC5L. Part of the spliceosome.

Its subcellular location is the cytoplasm. The protein localises to the nucleus. DsDNA-dependent ATPase which acts as a transcription termination factor by coupling ATP hydrolysis with removal of RNA polymerase II from the DNA template. May contribute to mitotic transcription repression. May also be involved in pre-mRNA splicing. The polypeptide is Transcription termination factor 2 (TTF2) (Homo sapiens (Human)).